Reading from the N-terminus, the 2075-residue chain is Autophagy-related protein 2 homolog B (2075 aa).

Residues 13 to 107 enclose the Chorein N-terminal domain; it reads ACRYLLQRYL…LEMVFRPRPR (95 aa). Residues S255, S379, S496, S839, S885, S898, and S1007 each carry the phosphoserine modification. Phosphotyrosine is present on Y1011. Phosphoserine is present on residues S1015 and S1017. Phosphothreonine is present on T1021. Residues 1373-1403 form a disordered region; that stretch reads KAEMKPGVPQRKPKVDSSARSSSHGPVLPEA. S1525 carries the phosphoserine modification. Disordered stretches follow at residues 1570–1593, 1759–1792, and 2055–2075; these read TSPA…GRHT, EPNL…EDVS, and RNQI…HGED. Over residues 1578–1587 the composition is skewed to polar residues; that stretch reads PHSSPSQTPT. The span at 2058–2075 shows a compositional bias: basic and acidic residues; it reads IRPDVRQDESQKWRHGED.

This sequence belongs to the ATG2 family. Interacts with WDR45/WIPI4.

Its subcellular location is the preautophagosomal structure membrane. It is found in the lipid droplet. It localises to the endoplasmic reticulum membrane. The enzyme catalyses a 1,2-diacyl-sn-glycero-3-phospho-L-serine(in) = a 1,2-diacyl-sn-glycero-3-phospho-L-serine(out). The catalysed reaction is a 1,2-diacyl-sn-glycero-3-phosphoethanolamine(in) = a 1,2-diacyl-sn-glycero-3-phosphoethanolamine(out). In terms of biological role, lipid transfer protein required for both autophagosome formation and regulation of lipid droplet morphology and dispersion. Tethers the edge of the isolation membrane (IM) to the endoplasmic reticulum (ER) and mediates direct lipid transfer from ER to IM for IM expansion. Binds to the ER exit site (ERES), which is the membrane source for autophagosome formation, and extracts phospholipids from the membrane source and transfers them to ATG9 (ATG9A or ATG9B) to the IM for membrane expansion. Lipid transfer activity is enhanced by WDR45/WIPI4, which promotes ATG2B-association with phosphatidylinositol 3-monophosphate (PI3P)-containing membranes. This chain is Autophagy-related protein 2 homolog B, found in Mus musculus (Mouse).